Consider the following 127-residue polypeptide: MPTIQQLVRTGRTQITKKSKSVALDSCPQRRGVCTRVYTTTPKKPNSAMRKVARVRLTNGNEVNAYIPGEGHNLQEHSIVLVRGGRVKDLPGVRYHIVRGALDTSGVAGRTQRRSKYGAKRPKEAKK.

Asp-89 is modified (3-methylthioaspartic acid). The segment at 101–127 (ALDTSGVAGRTQRRSKYGAKRPKEAKK) is disordered. Basic residues predominate over residues 111–127 (TQRRSKYGAKRPKEAKK).

The protein belongs to the universal ribosomal protein uS12 family. As to quaternary structure, part of the 30S ribosomal subunit. Contacts proteins S8 and S17. May interact with IF1 in the 30S initiation complex.

Functionally, with S4 and S5 plays an important role in translational accuracy. Interacts with and stabilizes bases of the 16S rRNA that are involved in tRNA selection in the A site and with the mRNA backbone. Located at the interface of the 30S and 50S subunits, it traverses the body of the 30S subunit contacting proteins on the other side and probably holding the rRNA structure together. The combined cluster of proteins S8, S12 and S17 appears to hold together the shoulder and platform of the 30S subunit. This chain is Small ribosomal subunit protein uS12, found in Flavobacterium johnsoniae (strain ATCC 17061 / DSM 2064 / JCM 8514 / BCRC 14874 / CCUG 350202 / NBRC 14942 / NCIMB 11054 / UW101) (Cytophaga johnsonae).